The sequence spans 365 residues: Chorismate synthase (365 aa).

NADP(+) contacts are provided by R48 and R54. FMN-binding positions include 131 to 133 (RSS), 243 to 244 (NA), G288, 303 to 307 (KPTSS), and R329.

Belongs to the chorismate synthase family. As to quaternary structure, homotetramer. Requires FMNH2 as cofactor.

It catalyses the reaction 5-O-(1-carboxyvinyl)-3-phosphoshikimate = chorismate + phosphate. The protein operates within metabolic intermediate biosynthesis; chorismate biosynthesis; chorismate from D-erythrose 4-phosphate and phosphoenolpyruvate: step 7/7. Its function is as follows. Catalyzes the anti-1,4-elimination of the C-3 phosphate and the C-6 proR hydrogen from 5-enolpyruvylshikimate-3-phosphate (EPSP) to yield chorismate, which is the branch point compound that serves as the starting substrate for the three terminal pathways of aromatic amino acid biosynthesis. This reaction introduces a second double bond into the aromatic ring system. The protein is Chorismate synthase of Rhizobium etli (strain CIAT 652).